We begin with the raw amino-acid sequence, 331 residues long: 6-phosphogluconolactonase (331 aa).

Residue lysine 287 is modified to N6-acetyllysine.

Belongs to the cycloisomerase 2 family.

The catalysed reaction is 6-phospho-D-glucono-1,5-lactone + H2O = 6-phospho-D-gluconate + H(+). The protein operates within carbohydrate degradation; pentose phosphate pathway; D-ribulose 5-phosphate from D-glucose 6-phosphate (oxidative stage): step 2/3. In terms of biological role, catalyzes the hydrolysis of 6-phosphogluconolactone to 6-phosphogluconate. In Escherichia coli O6:K15:H31 (strain 536 / UPEC), this protein is 6-phosphogluconolactonase.